We begin with the raw amino-acid sequence, 295 residues long: Mycothiol acetyltransferase (295 aa).

2 consecutive N-acetyltransferase domains span residues 5 to 141 (VEIR…TPLP) and 149 to 295 (VRLR…MYRR). Glu35 contributes to the 1D-myo-inositol 2-(L-cysteinylamino)-2-deoxy-alpha-D-glucopyranoside binding site. 76 to 78 (LVV) is a binding site for acetyl-CoA. 1D-myo-inositol 2-(L-cysteinylamino)-2-deoxy-alpha-D-glucopyranoside is bound by residues Glu176, Lys215, and Glu229. Acetyl-CoA contacts are provided by residues 233–235 (VGV) and 240–246 (RGTGLGR). A 1D-myo-inositol 2-(L-cysteinylamino)-2-deoxy-alpha-D-glucopyranoside-binding site is contributed by Tyr267. 272–277 (NTAAVR) contacts acetyl-CoA.

It belongs to the acetyltransferase family. MshD subfamily. As to quaternary structure, monomer.

It carries out the reaction 1D-myo-inositol 2-(L-cysteinylamino)-2-deoxy-alpha-D-glucopyranoside + acetyl-CoA = mycothiol + CoA + H(+). In terms of biological role, catalyzes the transfer of acetyl from acetyl-CoA to desacetylmycothiol (Cys-GlcN-Ins) to form mycothiol. This is Mycothiol acetyltransferase from Thermobispora bispora (strain ATCC 19993 / DSM 43833 / CBS 139.67 / JCM 10125 / KCTC 9307 / NBRC 14880 / R51).